A 113-amino-acid polypeptide reads, in one-letter code: Major basic nuclear protein 1 (113 aa).

Positions 1-20 (MAPKMKAAMKAMKAPAMKGK) are disordered.

The protein resides in the nucleus. The chain is Major basic nuclear protein 1 (HCc1) from Crypthecodinium cohnii (Dinoflagellate).